The primary structure comprises 185 residues: Prenylated Rab acceptor protein 1 (185 aa).

Topologically, residues 1 to 78 (MAAQKDQQKD…RNVEYYQSNY (78 aa)) are cytoplasmic. Positions 30 to 54 (AGREWLERRRATIRPWGSFVDQRRF) are required for interaction with prenylated RAB3A and VAMP2. Transmembrane regions (helical) follow at residues 79–94 (VFVF…VTSP) and 95–112 (MLLV…ILYL). The Cytoplasmic segment spans residues 113–131 (RTLQSKFVLFGREVSPAHQ). A run of 2 helical transmembrane segments spans residues 132–148 (YALA…LAGA) and 149–165 (GSAV…VIGS). Residues 165 to 185 (SHAAFHQIEAVDGEELQMEPV) are required for interaction with GDI1. Topologically, residues 166 to 185 (HAAFHQIEAVDGEELQMEPV) are cytoplasmic. The required for interaction with prenylated RAB3A and VAMP2 stretch occupies residues 175–185 (VDGEELQMEPV). Positions 175-185 (VDGEELQMEPV) are homodimerization.

It belongs to the PRA1 family. Homodimer. Interacts with VAMP2 (synaptobrevin-2), prenylated Rab proteins, GDI1, NRDG1 and PCLO.

Its subcellular location is the cell membrane. The protein localises to the cytoplasm. It is found in the golgi apparatus. It localises to the cytoplasmic vesicle. The protein resides in the secretory vesicle. Its subcellular location is the synaptic vesicle. In terms of biological role, general Rab protein regulator required for vesicle formation from the Golgi complex. May control vesicle docking and fusion by mediating the action of Rab GTPases to the SNARE complexes. In addition it inhibits the removal of Rab GTPases from the membrane by GDI1. The polypeptide is Prenylated Rab acceptor protein 1 (RABAC1) (Sus scrofa (Pig)).